The sequence spans 359 residues: sn-1 acyl-lipid omega-3 desaturase (ferredoxin) (359 aa).

Over residues 1–15 (MQLDTISFNNPLNSE) the composition is skewed to polar residues. Residues 1–20 (MQLDTISFNNPLNSETSEDT) are disordered. 2 helical membrane passes run 47 to 67 (LFYF…ASYL) and 70 to 90 (WLFF…LFVV). The Histidine box-1 signature appears at 92–96 (HDCGH). The short motif at 128–132 (HRTHH) is the Histidine box-2 element. Transmembrane regions (helical) follow at residues 207 to 227 (VLLI…GWMW) and 228 to 248 (LLKY…LVTF). The Histidine box-3 signature appears at 294-298 (HHIFL).

It belongs to the fatty acid desaturase type 2 family. Requires Fe(2+) as cofactor.

The protein resides in the membrane. It catalyses the reaction a 1-[(9Z,12Z)-octadecdienoyl]-2-acyl-glycerolipid + 2 reduced [2Fe-2S]-[ferredoxin] + O2 + 2 H(+) = a 1-[(9Z,12Z,15Z)-octadectrienoyl]-2-acyl-glycerolipid + 2 oxidized [2Fe-2S]-[ferredoxin] + 2 H2O. The catalysed reaction is a 1-[(6Z,9Z,12Z)-octadectrienoyl]-2-acyl-glycerolipid + 2 reduced [2Fe-2S]-[ferredoxin] + O2 + 2 H(+) = a 1-[(6Z,9Z,12Z,15Z)-octadectetraenoyl]-2-acyl-glycerolipid + 2 oxidized [2Fe-2S]-[ferredoxin] + 2 H2O. It participates in lipid metabolism; polyunsaturated fatty acid biosynthesis. Functionally, desaturase involved in fatty acid biosynthesis. Introduces a double bond at carbon 15 of linoleoyl and gamma-linolenoyl groups attached to the sn-1 position of the glycerol moiety of membrane glycerolipids. This chain is sn-1 acyl-lipid omega-3 desaturase (ferredoxin), found in Nostoc sp. (strain 36).